The sequence spans 263 residues: MPEGPEIRRAADNLEAAIKGKPLTDVWFAFPQLKTYQSQLIGQHVTHVETRGKALLTHFPNGLTLYSHNQLYGVWRVVDTGEEPQTTRVLRVKLQTADKTILLYSASDIEMLRPEQLTTHPFLQRVGPDVLDPNLTPEVVKERLLSPRFRNRQFAGLLLDQAFLAGLGNYLRVEILWQVGLTGNHKAKDLNAAQLDALAHALLEIPRFSYATRGQVDENKHHGALFRFKVFHRDGELCERCGGIIEKTTLSSRPFYWCPGCQH.

The active-site Schiff-base intermediate with DNA is proline 2. The active-site Proton donor is glutamate 3. The active-site Proton donor; for beta-elimination activity is the lysine 53. Positions 70, 125, and 169 each coordinate DNA. An FPG-type zinc finger spans residues lysine 229–histidine 263. Arginine 253 serves as the catalytic Proton donor; for delta-elimination activity.

It belongs to the FPG family. Zn(2+) serves as cofactor.

The catalysed reaction is 2'-deoxyribonucleotide-(2'-deoxyribose 5'-phosphate)-2'-deoxyribonucleotide-DNA = a 3'-end 2'-deoxyribonucleotide-(2,3-dehydro-2,3-deoxyribose 5'-phosphate)-DNA + a 5'-end 5'-phospho-2'-deoxyribonucleoside-DNA + H(+). Functionally, involved in base excision repair of DNA damaged by oxidation or by mutagenic agents. Acts as a DNA glycosylase that recognizes and removes damaged bases. Has a preference for oxidized pyrimidines, such as thymine glycol, 5,6-dihydrouracil and 5,6-dihydrothymine. Has AP (apurinic/apyrimidinic) lyase activity and introduces nicks in the DNA strand. Cleaves the DNA backbone by beta-delta elimination to generate a single-strand break at the site of the removed base with both 3'- and 5'-phosphates. The sequence is that of Endonuclease 8 from Shigella flexneri serotype 5b (strain 8401).